The primary structure comprises 641 residues: Chaperone protein DnaK (641 aa).

Phosphothreonine; by autocatalysis is present on Thr199. The segment covering Lys577 to Lys590 has biased composition (basic and acidic residues). The interval Lys577–Lys641 is disordered. Residues Gly617–Asp626 are compositionally biased toward low complexity. Over residues Asp627–Lys641 the composition is skewed to acidic residues.

It belongs to the heat shock protein 70 family.

In terms of biological role, acts as a chaperone. In Thioalkalivibrio sulfidiphilus (strain HL-EbGR7), this protein is Chaperone protein DnaK.